A 1048-amino-acid polypeptide reads, in one-letter code: Probable inactive receptor kinase At5g10020 (1048 aa).

An N-terminal signal peptide occupies residues 1–21 (MSHFLTFCFLSLLLLLHGANA). LRR repeat units follow at residues 100–120 (RLRN…PSLG), 124–146 (SLQH…ISEL), 148–169 (SLNH…GFRN), 172–194 (QLRS…FTEL), 196–217 (NVEF…PMEN), 224–246 (TLRH…ESIG), 250–272 (NLEI…GSQP), 273–294 (SLRI…ELLQ), 298–319 (PLLE…INSS), 320–342 (TLTM…FKSC), 365–387 (TPDV…TSAF), 389–411 (RLSV…WGDS), 412–433 (QFSV…SFFT), 436–457 (SLRS…RGSR), 469–491 (QMEL…IGTM), 493–516 (KIKV…NKLS), 517–539 (GLLF…LPSQ), and 540–560 (MVGF…DLRS). A helical transmembrane segment spans residues 602 to 622 (IAIIVASVGAAIMILFVLFAY). The tract at residues 696–733 (EQGAPATSAPTNLLDDYPAASGRKSSSGGSPLSSSPRF) is disordered. A compositionally biased stretch (low complexity) spans 716 to 733 (SGRKSSSGGSPLSSSPRF). Residue Ser-744 is modified to Phosphoserine. Residues 768–1045 (RAPAEVLGRS…IRQVLDHLTS (278 aa)) form the Protein kinase domain. ATP-binding positions include 774–782 (LGRSSHGTL) and Lys-796.

The protein belongs to the protein kinase superfamily.

Its subcellular location is the membrane. This Arabidopsis thaliana (Mouse-ear cress) protein is Probable inactive receptor kinase At5g10020.